The primary structure comprises 336 residues: Phospho-N-acetylmuramoyl-pentapeptide-transferase (336 aa).

A run of 10 helical transmembrane segments spans residues 3 to 23 (LTLI…PYFI), 53 to 73 (GGTV…LFSI), 78 to 98 (SLAL…IGFL), 118 to 138 (LALQ…PSGI), 143 to 163 (VFGY…FWVV), 174 to 194 (GIDG…GVIA), 200 to 220 (FDVL…FCFN), 226 to 246 (VFMG…ISIA), 251 to 271 (WTLL…MLQV), and 316 to 336 (AFLW…LYVF).

It belongs to the glycosyltransferase 4 family. MraY subfamily. Requires Mg(2+) as cofactor.

Its subcellular location is the cell membrane. The enzyme catalyses UDP-N-acetyl-alpha-D-muramoyl-L-alanyl-gamma-D-glutamyl-L-lysyl-D-alanyl-D-alanine + di-trans,octa-cis-undecaprenyl phosphate = Mur2Ac(oyl-L-Ala-gamma-D-Glu-L-Lys-D-Ala-D-Ala)-di-trans,octa-cis-undecaprenyl diphosphate + UMP. The protein operates within cell wall biogenesis; peptidoglycan biosynthesis. Catalyzes the initial step of the lipid cycle reactions in the biosynthesis of the cell wall peptidoglycan: transfers peptidoglycan precursor phospho-MurNAc-pentapeptide from UDP-MurNAc-pentapeptide onto the lipid carrier undecaprenyl phosphate, yielding undecaprenyl-pyrophosphoryl-MurNAc-pentapeptide, known as lipid I. The protein is Phospho-N-acetylmuramoyl-pentapeptide-transferase of Streptococcus pyogenes serotype M1.